The following is a 312-amino-acid chain: Telomere-binding protein OPG077 (312 aa).

It belongs to the orthopoxvirus OPG077 family.

The protein localises to the virion. Its function is as follows. DNA-binding protein which binds to the hairpin form of the viral telomeric sequence. Required for the production of mature virions (MV). This Vaccinia virus (strain L-IVP) (VACV) protein is Telomere-binding protein OPG077 (OPG077).